Reading from the N-terminus, the 120-residue chain is Large ribosomal subunit protein uL18 (120 aa).

It belongs to the universal ribosomal protein uL18 family. As to quaternary structure, part of the 50S ribosomal subunit; part of the 5S rRNA/L5/L18/L25 subcomplex. Contacts the 5S and 23S rRNAs.

In terms of biological role, this is one of the proteins that bind and probably mediate the attachment of the 5S RNA into the large ribosomal subunit, where it forms part of the central protuberance. The chain is Large ribosomal subunit protein uL18 from Brucella suis biovar 1 (strain 1330).